The chain runs to 450 residues: Oxygen-independent coproporphyrinogen III oxidase (450 aa).

The region spanning 42-276 is the Radical SAM core domain; that stretch reads LPAGASASLY…CAIANALKEA (235 aa). Tyr-51 contributes to the S-adenosyl-L-methionine binding site. [4Fe-4S] cluster-binding residues include Cys-57 and Cys-61. An S-adenosyl-L-methionine-binding site is contributed by Tyr-63. [4Fe-4S] cluster is bound at residue Cys-64. Residues Gly-108, 109–110, Glu-141, Gln-168, Arg-180, Asp-205, Ala-239, and Ile-325 each bind S-adenosyl-L-methionine; that span reads GT.

The protein belongs to the anaerobic coproporphyrinogen-III oxidase family. As to quaternary structure, monomer. It depends on [4Fe-4S] cluster as a cofactor.

The protein localises to the cytoplasm. The enzyme catalyses coproporphyrinogen III + 2 S-adenosyl-L-methionine = protoporphyrinogen IX + 2 5'-deoxyadenosine + 2 L-methionine + 2 CO2. Its pathway is porphyrin-containing compound metabolism; protoporphyrin-IX biosynthesis; protoporphyrinogen-IX from coproporphyrinogen-III (AdoMet route): step 1/1. Functionally, involved in the heme biosynthesis. Catalyzes the anaerobic oxidative decarboxylation of propionate groups of rings A and B of coproporphyrinogen III to yield the vinyl groups in protoporphyrinogen IX. This is Oxygen-independent coproporphyrinogen III oxidase (hemN) from Bradyrhizobium diazoefficiens (strain JCM 10833 / BCRC 13528 / IAM 13628 / NBRC 14792 / USDA 110).